The following is an 827-amino-acid chain: Lon protease (827 aa).

The Lon N-terminal domain occupies 38–233; the sequence is LTLLASKYNV…VLLKYLLKDL (196 aa). 384 to 391 provides a ligand contact to ATP; sequence GPPGVGKT. The region spanning 619-800 is the Lon proteolytic domain; the sequence is THLPGVAIGL…EEVIQLALQP (182 aa). Catalysis depends on residues Ser706 and Lys749.

This sequence belongs to the peptidase S16 family. In terms of assembly, homohexamer. Organized in a ring with a central cavity.

It is found in the cytoplasm. The enzyme catalyses Hydrolysis of proteins in presence of ATP.. ATP-dependent serine protease that mediates the selective degradation of mutant and abnormal proteins as well as certain short-lived regulatory proteins. Required for cellular homeostasis and for survival from DNA damage and developmental changes induced by stress. Degrades polypeptides processively to yield small peptide fragments that are 5 to 10 amino acids long. Binds to DNA in a double-stranded, site-specific manner. The protein is Lon protease of Amoebophilus asiaticus (strain 5a2).